Here is a 682-residue protein sequence, read N- to C-terminus: Potassium-transporting ATPase ATP-binding subunit (682 aa).

Transmembrane regions (helical) follow at residues 34-54 (PVMFIVWIGSLLTTCISIAMA), 62-82 (ALFSAAISGWLWITVLFANFA), 219-239 (IALTILLIALTIVFLLATATL), and 254-274 (VLVALLVCLIPTTIGGLLSAI). The active-site 4-aspartylphosphate intermediate is the Asp-307. ATP is bound by residues Asp-344, Glu-348, 377 to 384 (FTAQSRMS), and Lys-395. The Mg(2+) site is built by Asp-518 and Asp-522. Transmembrane regions (helical) follow at residues 588–608 (FAIIPAAFAATYPQLNALNIM), 616–636 (AILSAVIFNALIIVFLIPLAL), and 656–676 (IYGLGGLLVPFIGIKVIDLLL).

It belongs to the cation transport ATPase (P-type) (TC 3.A.3) family. Type IA subfamily. The system is composed of three essential subunits: KdpA, KdpB and KdpC.

It localises to the cell inner membrane. It carries out the reaction K(+)(out) + ATP + H2O = K(+)(in) + ADP + phosphate + H(+). In terms of biological role, part of the high-affinity ATP-driven potassium transport (or Kdp) system, which catalyzes the hydrolysis of ATP coupled with the electrogenic transport of potassium into the cytoplasm. This subunit is responsible for energy coupling to the transport system and for the release of the potassium ions to the cytoplasm. The protein is Potassium-transporting ATPase ATP-binding subunit of Escherichia coli (strain ATCC 8739 / DSM 1576 / NBRC 3972 / NCIMB 8545 / WDCM 00012 / Crooks).